Reading from the N-terminus, the 481-residue chain is MRMSLQAPRRLLELAGQSLLGDQALAISILDELPRELFPPLFVEAFTSRRCEVLKVMVQAWPFPCLPLGSLMKTPDLEILHYVVDGIDCLLAQKVRPRRWKLQVLELRDVDENFWTIWSGARPLSCSPEAMSKRQTVEDCPRTGEKQPLKVFMDVCLKEKFMDEDLSFFSGWVQHRRGSVHLCCTKVVNYSMSILNFRNILETVYPDSIQVLEIWNMCWPCMIVEFSRYLSQMRNLRKLFISDGCRYLLSSDSQEQLVAEFSSVLLRLEYLQMLYVRRVCFFRGHLDQLIRCLRSPLETLALTYGFLEKVDLKCLPRYPSLSQLKQLNLSHGALRFIRLEPLRALLEKVAATLQTLFLVDCGIRDSKLRVILPALSCCSNLTTFCFHGNDTSMDGLKDLLRHTGRLSNLSLETYPAPRESLDDRGRVISELLTPLQAELMRILREVREPKRIFFGPVSCPCCGTSPTEQLEFNFCLWGRPA.

The stretch at 99-126 is one LRR 1; degenerate repeat; sequence RWKLQVLELRDVDENFWTIWSGARPLSC. The LRR 2; degenerate repeat unit spans residues 181–205; sequence HLCCTKVVNYSMSILNFRNILETVY. The stretch at 206 to 232 is one LRR 3; degenerate repeat; that stretch reads PDSIQVLEIWNMCWPCMIVEFSRYLSQ. One copy of the LRR 4; degenerate repeat lies at 233-267; that stretch reads MRNLRKLFISDGCRYLLSSDSQEQLVAEFSSVLLR. LRR repeat units follow at residues 268–293, 294–325, 326–344, 350–377, and 378–402; these read LEYL…IRCL, RSPL…SQLK, QLNL…PLRA, AATL…ALSC, and CSNL…LLRH.

The protein belongs to the PRAME family.

This is PRAME family member 22 from Homo sapiens (Human).